The sequence spans 599 residues: Membrane protein insertase YidC (599 aa).

The helical transmembrane segment at Asn-6–Met-26 threads the bilayer. Residues Arg-35–Arg-78 form a disordered region. Positions Gln-41 to Ala-76 are enriched in low complexity. Helical transmembrane passes span Phe-378–Ser-398, Trp-448–Ile-468, Val-501–Gln-521, and Ile-536–Val-556.

This sequence belongs to the OXA1/ALB3/YidC family. Type 1 subfamily. Interacts with the Sec translocase complex via SecD. Specifically interacts with transmembrane segments of nascent integral membrane proteins during membrane integration.

It localises to the cell inner membrane. Required for the insertion and/or proper folding and/or complex formation of integral membrane proteins into the membrane. Involved in integration of membrane proteins that insert both dependently and independently of the Sec translocase complex, as well as at least some lipoproteins. Aids folding of multispanning membrane proteins. The polypeptide is Membrane protein insertase YidC (Agrobacterium fabrum (strain C58 / ATCC 33970) (Agrobacterium tumefaciens (strain C58))).